The chain runs to 484 residues: tRNA sulfurtransferase (484 aa).

The region spanning 63–167 is the THUMP domain; that stretch reads QAFGERLACI…RDNLYMVTKR (105 aa). Residues 185 to 186, K267, G289, and Q298 each bind ATP; that span reads LI. C346 and C458 are joined by a disulfide. The region spanning 406–484 is the Rhodanese domain; the sequence is IDTNQVVIDI…GYTNVKVYRP (79 aa). C458 serves as the catalytic Cysteine persulfide intermediate.

Belongs to the ThiI family.

The protein resides in the cytoplasm. The catalysed reaction is [ThiI sulfur-carrier protein]-S-sulfanyl-L-cysteine + a uridine in tRNA + 2 reduced [2Fe-2S]-[ferredoxin] + ATP + H(+) = [ThiI sulfur-carrier protein]-L-cysteine + a 4-thiouridine in tRNA + 2 oxidized [2Fe-2S]-[ferredoxin] + AMP + diphosphate. It catalyses the reaction [ThiS sulfur-carrier protein]-C-terminal Gly-Gly-AMP + S-sulfanyl-L-cysteinyl-[cysteine desulfurase] + AH2 = [ThiS sulfur-carrier protein]-C-terminal-Gly-aminoethanethioate + L-cysteinyl-[cysteine desulfurase] + A + AMP + 2 H(+). Its pathway is cofactor biosynthesis; thiamine diphosphate biosynthesis. In terms of biological role, catalyzes the ATP-dependent transfer of a sulfur to tRNA to produce 4-thiouridine in position 8 of tRNAs, which functions as a near-UV photosensor. Also catalyzes the transfer of sulfur to the sulfur carrier protein ThiS, forming ThiS-thiocarboxylate. This is a step in the synthesis of thiazole, in the thiamine biosynthesis pathway. The sulfur is donated as persulfide by IscS. This Shewanella baltica (strain OS155 / ATCC BAA-1091) protein is tRNA sulfurtransferase.